The primary structure comprises 179 residues: Archaemetzincin (179 aa).

His128 contacts Zn(2+). Residue Glu129 is the Proton acceptor of the active site. His132, His138, Cys139, Cys144, Cys163, and Cys166 together coordinate Zn(2+).

It belongs to the peptidase M54 family. As to quaternary structure, monomer. Zn(2+) is required as a cofactor.

Functionally, probable zinc metalloprotease whose natural substrate is unknown. The sequence is that of Archaemetzincin from Methanocaldococcus jannaschii (strain ATCC 43067 / DSM 2661 / JAL-1 / JCM 10045 / NBRC 100440) (Methanococcus jannaschii).